The primary structure comprises 638 residues: Threonine--tRNA ligase (638 aa).

In terms of domain architecture, TGS spans 1 to 61 (MPIITLPDGS…NKDSKVVIIT (61 aa)). Residues 242-533 (DHRKLGKKHS…LIEQYEAKFP (292 aa)) form a catalytic region. Zn(2+) is bound by residues Cys333, His384, and His510.

The protein belongs to the class-II aminoacyl-tRNA synthetase family. As to quaternary structure, homodimer. Requires Zn(2+) as cofactor.

Its subcellular location is the cytoplasm. The enzyme catalyses tRNA(Thr) + L-threonine + ATP = L-threonyl-tRNA(Thr) + AMP + diphosphate + H(+). Its function is as follows. Catalyzes the attachment of threonine to tRNA(Thr) in a two-step reaction: L-threonine is first activated by ATP to form Thr-AMP and then transferred to the acceptor end of tRNA(Thr). Also edits incorrectly charged L-seryl-tRNA(Thr). The protein is Threonine--tRNA ligase of Prochlorococcus marinus (strain AS9601).